A 248-amino-acid chain; its full sequence is Ribosomal RNA small subunit methyltransferase G (248 aa).

S-adenosyl-L-methionine is bound by residues Gly-85, Phe-90, 137-138 (IE), and Arg-156.

This sequence belongs to the methyltransferase superfamily. RNA methyltransferase RsmG family.

It is found in the cytoplasm. Functionally, specifically methylates the N7 position of a guanine in 16S rRNA. This Parasynechococcus marenigrum (strain WH8102) protein is Ribosomal RNA small subunit methyltransferase G.